The primary structure comprises 762 residues: Transcription factor kpeA (762 aa).

Residues 267–361 form a disordered region; sequence FDHTSHGSQS…PLKPDQRKQA (95 aa). A compositionally biased stretch (low complexity) spans 294-312; sequence KKPSSPTRSTGSSSSTSPP. Positions 370 to 401 form a DNA-binding region, zn(2)-C6 fungal-type; that stretch reads CLRCKFLKKTCDKGEPCAGCQPSHARLWQVPC.

Its subcellular location is the nucleus. Its function is as follows. Transcription factor that regulates conidiation as well as kojic acid production, likely by negatively controlling kojR and kojA expression. This Aspergillus oryzae (strain ATCC 42149 / RIB 40) (Yellow koji mold) protein is Transcription factor kpeA.